A 1013-amino-acid chain; its full sequence is Hemoglobin-binding protein A (1013 aa).

The first 24 residues, 1 to 24 (MTNFKFSLLACSIAFALNASTAYA), serve as a signal peptide directing secretion. Repeat copies occupy residues 26–29 (QPTN), 30–33 (QPTN), 34–37 (QPTN), 38–41 (QPTN), 42–45 (QPTN), 46–49 (QPTN), 50–53 (QPTN), and 54–57 (QPTN). An 8 X 4 AA tandem repeats of Q-P-T-N region spans residues 26-57 (QPTNQPTNQPTNQPTNQPTNQPTNQPTNQPTN). A compositionally biased stretch (low complexity) spans 26 to 58 (QPTNQPTNQPTNQPTNQPTNQPTNQPTNQPTNQ). The disordered stretch occupies residues 26-61 (QPTNQPTNQPTNQPTNQPTNQPTNQPTNQPTNQDSN). Residues 67–74 (EQINVSGS) carry the TonB box motif. The 128-residue stretch at 78-205 (SDSKTPPKIA…LGGSVIYKTK (128 aa)) folds into the TBDR plug domain. Positions 213–1013 (NKDYYVSYKK…NYKMSVQFEF (801 aa)) constitute a TBDR beta-barrel domain. A TonB C-terminal box motif is present at residues 996-1013 (NRFYAPGRNYKMSVQFEF).

The protein belongs to the TonB-dependent receptor family. Hemoglobin/haptoglobin binding protein subfamily.

It localises to the cell outer membrane. Its function is as follows. Acts as a receptor for hemoglobin of the human host and is required for heme uptake. This is Hemoglobin-binding protein A (hgbA) from Haemophilus influenzae.